We begin with the raw amino-acid sequence, 53 residues long: Ferredoxin B (53 aa).

The interval 1-35 is N-terminal extension; sequence GIDPNYRSLPVVKEEQGVKIYGTYEPPTKLGIWGT. Lys-29 carries the post-translational modification N6-methyllysine. In terms of domain architecture, 4Fe-4S ferredoxin-type 1 spans 34 to 53; that stretch reads GTIVGVDFDLCIADGSCINA. Positions 44 and 50 each coordinate [3Fe-4S] cluster.

Requires [3Fe-4S] cluster as cofactor. It depends on [4Fe-4S] cluster as a cofactor.

Ferredoxins are iron-sulfur proteins that transfer electrons in a wide variety of metabolic reactions. This Sulfuracidifex metallicus (Sulfolobus metallicus) protein is Ferredoxin B.